We begin with the raw amino-acid sequence, 154 residues long: Large ribosomal subunit protein uL15 (154 aa).

Positions 1-54 (MKLHDLTPAPGSRKPKKRVGRGPGGTDKTAGRGHKGQKSRSGAGKGPFFEGGRS) are disordered.

The protein belongs to the universal ribosomal protein uL15 family. As to quaternary structure, part of the 50S ribosomal subunit.

In terms of biological role, binds to the 23S rRNA. The sequence is that of Large ribosomal subunit protein uL15 from Deinococcus geothermalis (strain DSM 11300 / CIP 105573 / AG-3a).